Here is a 593-residue protein sequence, read N- to C-terminus: MSRPSSRAIYLHRKEYSQNLTSEPTLLQHRVEHLMTCKQGSQRVQGPEDALQKLFEMDAQGRVWSQDLILQVRDGWLQLLDIETKEELDSYRLDSIQAMNVALNTCSYNSILSITVQEPGLPGTSTLLFQCQEVGAERLKTSLQKALEEELEQRPRLGGLQPGQDRWRGPAMERPLPMEQARYLEPGIPPEQPHQRTLEHSLPPSPRPLPRHTSAREPSAFTLPPPRRSSSPEDPERDEEVLNHVLRDIELFMGKLEKAQAKTSRKKKFGKKNKDQGGLTQAQYIDCFQKIKHSFNLLGRLATWLKETSAPELVHILFKSLNFILARCPEAGLAAQVISPLLTPKAINLLQSCLSPPESNLWMGLGPAWTTSRADWTGDEPLPYQPTFSDDWQLPEPSSQAPLGYQDPVSLRRGSHRLGSTSHFPQEKTHNHDPQPGDPNSRPSSPKPAQPALKMQVLYEFEARNPRELTVVQGEKLEVLDHSKRWWLVKNEAGRSGYIPSNILEPLQPGTPGTQGQSPSRVPMLRLSSRPEEVTDWLQAENFSTATVRTLGSLTGSQLLRIRPGELQMLCPQEAPRILSRLEAVRRMLGISP.

Residues 28-155 (QHRVEHLMTC…ALEEELEQRP (128 aa)) form the PTB domain. 3 disordered regions span residues 149–171 (EELE…RGPA), 184–239 (LEPG…ERDE), and 374–451 (ADWT…PAQP). The residue at position 231 (serine 231) is a Phosphoserine. Residues 386 to 401 (PTFSDDWQLPEPSSQA) are compositionally biased toward polar residues. Over residues 425–435 (PQEKTHNHDPQ) the composition is skewed to basic and acidic residues. The region spanning 450-509 (QPALKMQVLYEFEARNPRELTVVQGEKLEVLDHSKRWWLVKNEAGRSGYIPSNILEPLQP) is the SH3 domain.

It belongs to the EPS8 family. As to quaternary structure, interacts with ABI1. Part of a complex that contains SOS1, ABI1 and EPS8L2. Interacts with FASLG.

The protein localises to the cytoplasm. This is Epidermal growth factor receptor kinase substrate 8-like protein 3 (EPS8L3) from Homo sapiens (Human).